We begin with the raw amino-acid sequence, 563 residues long: NAD-dependent malic enzyme (563 aa).

The Proton donor role is filled by tyrosine 101. Arginine 154 is an NAD(+) binding site. The Proton acceptor role is filled by lysine 172. Glutamate 243, aspartate 244, and aspartate 267 together coordinate a divalent metal cation. NAD(+)-binding residues include aspartate 267 and asparagine 416.

Belongs to the malic enzymes family. In terms of assembly, homotetramer. The cofactor is Mg(2+). It depends on Mn(2+) as a cofactor.

It carries out the reaction (S)-malate + NAD(+) = pyruvate + CO2 + NADH. The catalysed reaction is oxaloacetate + H(+) = pyruvate + CO2. In Pseudomonas syringae pv. tomato (strain ATCC BAA-871 / DC3000), this protein is NAD-dependent malic enzyme.